We begin with the raw amino-acid sequence, 649 residues long: DNA mismatch repair protein MutL (649 aa).

The protein belongs to the DNA mismatch repair MutL/HexB family.

This protein is involved in the repair of mismatches in DNA. It is required for dam-dependent methyl-directed DNA mismatch repair. May act as a 'molecular matchmaker', a protein that promotes the formation of a stable complex between two or more DNA-binding proteins in an ATP-dependent manner without itself being part of a final effector complex. The protein is DNA mismatch repair protein MutL of Streptococcus pneumoniae (strain JJA).